Here is a 158-residue protein sequence, read N- to C-terminus: Lipoprotein signal peptidase (158 aa).

3 helical membrane passes run 12–32, 46–66, and 71–91; these read LFWWVAGLALASDRLTKAWIV, IIPGVFHITYVTNTGAAFSLF, and IWLRWLSLIVSLGLITWAILG. Catalysis depends on residues aspartate 124 and aspartate 140. Residues 135–155 traverse the membrane as a helical segment; the sequence is VFNVADIAINIGIVCLLWSAW.

Belongs to the peptidase A8 family.

The protein resides in the cell inner membrane. It carries out the reaction Release of signal peptides from bacterial membrane prolipoproteins. Hydrolyzes -Xaa-Yaa-Zaa-|-(S,diacylglyceryl)Cys-, in which Xaa is hydrophobic (preferably Leu), and Yaa (Ala or Ser) and Zaa (Gly or Ala) have small, neutral side chains.. The protein operates within protein modification; lipoprotein biosynthesis (signal peptide cleavage). Its function is as follows. This protein specifically catalyzes the removal of signal peptides from prolipoproteins. This is Lipoprotein signal peptidase from Thermosynechococcus vestitus (strain NIES-2133 / IAM M-273 / BP-1).